Consider the following 262-residue polypeptide: Glutamine-binding protein (262 aa).

The signal sequence occupies residues 1–26 (MKRKTVWKIWITLALIALLSITALAG). A lipid anchor (N-palmitoyl cysteine) is attached at cysteine 27. Cysteine 27 is lipidated: S-diacylglycerol cysteine.

This sequence belongs to the bacterial solute-binding protein 3 family.

Its subcellular location is the cell membrane. Its function is as follows. Involved in glutamine-transport system. Interacts with the glutamine-transport system GlnPQ. The polypeptide is Glutamine-binding protein (glnH) (Geobacillus stearothermophilus (Bacillus stearothermophilus)).